A 282-amino-acid polypeptide reads, in one-letter code: ATP phosphoribosyltransferase (282 aa).

This sequence belongs to the ATP phosphoribosyltransferase family. Long subfamily. Requires Mg(2+) as cofactor.

It is found in the cytoplasm. The enzyme catalyses 1-(5-phospho-beta-D-ribosyl)-ATP + diphosphate = 5-phospho-alpha-D-ribose 1-diphosphate + ATP. It functions in the pathway amino-acid biosynthesis; L-histidine biosynthesis; L-histidine from 5-phospho-alpha-D-ribose 1-diphosphate: step 1/9. Feedback inhibited by histidine. In terms of biological role, catalyzes the condensation of ATP and 5-phosphoribose 1-diphosphate to form N'-(5'-phosphoribosyl)-ATP (PR-ATP). Has a crucial role in the pathway because the rate of histidine biosynthesis seems to be controlled primarily by regulation of HisG enzymatic activity. In Pyrobaculum neutrophilum (strain DSM 2338 / JCM 9278 / NBRC 100436 / V24Sta) (Thermoproteus neutrophilus), this protein is ATP phosphoribosyltransferase.